A 503-amino-acid chain; its full sequence is Na(+)-translocating NADH-quinone reductase subunit B (503 aa).

3 helical membrane-spanning segments follow: residues 55-75 (MMLV…NSGL), 120-142 (IFLP…FAII), and 160-180 (LILP…FGVV). T248 is subject to FMN phosphoryl threonine. 5 helical membrane-spanning segments follow: residues 361–381 (TSTV…IASW), 384–404 (MLSF…MSIL), 417–437 (FFIP…LVFM), 452–472 (WLYG…NPAY), and 475–495 (GVML…NIAL).

It belongs to the NqrB/RnfD family. In terms of assembly, composed of six subunits; NqrA, NqrB, NqrC, NqrD, NqrE and NqrF. It depends on FMN as a cofactor.

Its subcellular location is the cell inner membrane. It catalyses the reaction a ubiquinone + n Na(+)(in) + NADH + H(+) = a ubiquinol + n Na(+)(out) + NAD(+). Its function is as follows. NQR complex catalyzes the reduction of ubiquinone-1 to ubiquinol by two successive reactions, coupled with the transport of Na(+) ions from the cytoplasm to the periplasm. NqrA to NqrE are probably involved in the second step, the conversion of ubisemiquinone to ubiquinol. This is Na(+)-translocating NADH-quinone reductase subunit B from Chlamydia trachomatis serovar A (strain ATCC VR-571B / DSM 19440 / HAR-13).